Here is a 271-residue protein sequence, read N- to C-terminus: MSFSNQNYNVHTFIIMNQSIKFWPEQERPRERLLHSGPESLSDAELLAIFLRTGSKQHSAVELARLMIQHFGGLNPVFDASLQELSHFHGIGTTKYAHLMAVKELGRRYLNHYFHQDALNLNSSRLVLDYLRYELLGEKQEVFAVLCLDSELRKLNFKKLFYGSLNACNISINHTLRYALQQHACHIVIAHNHPFGKAEPSAADLDLTHQLYQACQLVEIKLLDHFIIAKDGTFSFAERALLSQKKCMHTDIDKPDLTGEDHHKKSCDRSP.

Residues 120–242 form the MPN domain; the sequence is NLNSSRLVLD…TFSFAERALL (123 aa). Residues His-191, His-193, and Asp-204 each coordinate Zn(2+). The JAMM motif signature appears at 191 to 204; it reads HNHPFGKAEPSAAD.

It belongs to the UPF0758 family.

This is UPF0758 protein ACIAD3126 from Acinetobacter baylyi (strain ATCC 33305 / BD413 / ADP1).